The sequence spans 260 residues: Thiazole synthase (260 aa).

Catalysis depends on lysine 100, which acts as the Schiff-base intermediate with DXP. 1-deoxy-D-xylulose 5-phosphate is bound by residues glycine 162, 188–189, and 210–211; these read AG and NT.

Belongs to the ThiG family. In terms of assembly, homotetramer. Forms heterodimers with either ThiH or ThiS.

Its subcellular location is the cytoplasm. The enzyme catalyses [ThiS sulfur-carrier protein]-C-terminal-Gly-aminoethanethioate + 2-iminoacetate + 1-deoxy-D-xylulose 5-phosphate = [ThiS sulfur-carrier protein]-C-terminal Gly-Gly + 2-[(2R,5Z)-2-carboxy-4-methylthiazol-5(2H)-ylidene]ethyl phosphate + 2 H2O + H(+). It functions in the pathway cofactor biosynthesis; thiamine diphosphate biosynthesis. In terms of biological role, catalyzes the rearrangement of 1-deoxy-D-xylulose 5-phosphate (DXP) to produce the thiazole phosphate moiety of thiamine. Sulfur is provided by the thiocarboxylate moiety of the carrier protein ThiS. In vitro, sulfur can be provided by H(2)S. This chain is Thiazole synthase, found in Wolinella succinogenes (strain ATCC 29543 / DSM 1740 / CCUG 13145 / JCM 31913 / LMG 7466 / NCTC 11488 / FDC 602W) (Vibrio succinogenes).